The following is a 241-amino-acid chain: Polyol phosphate phosphatase PYP1 (241 aa).

The active-site Nucleophile is Asp-9. The Mg(2+) site is built by Asp-9, Asp-11, and Asp-179. Catalysis depends on Asp-11, which acts as the Proton donor.

This sequence belongs to the HAD-like hydrolase superfamily. Requires Mg(2+) as cofactor.

Its subcellular location is the cytoplasm. It localises to the nucleus. It carries out the reaction D-ribitol 5-phosphate + H2O = ribitol + phosphate. It catalyses the reaction D-sorbitol 6-phosphate + H2O = D-sorbitol + phosphate. The catalysed reaction is sn-glycerol 1-phosphate + H2O = glycerol + phosphate. The enzyme catalyses D-erythrose 4-phosphate + H2O = D-erythrose + phosphate. Its function is as follows. Hydrolyzes sugar alcohol (polyol) phosphates. Dephosphorylates a variety of substrates, including: sn-glycerol 1-phosphate (D-glycerol 3-phosphate), D-ribitol 5-phosphate, D-sorbitol 6-phosphate (D-glucitol 6-phosphate), and D-erythrose 4-phosphate. Prevents accumulation of toxic levels of polyol phosphates, which can impair glycolysis by inhibiting glucose-6-phosphate isomerase. The polypeptide is Polyol phosphate phosphatase PYP1 (Saccharomyces cerevisiae (strain ATCC 204508 / S288c) (Baker's yeast)).